Reading from the N-terminus, the 328-residue chain is UPF0421 protein SAR1980 (328 aa).

4 helical membrane-spanning segments follow: residues 19–39 (IAIF…IYAI), 61–81 (LPAT…FGDQ), 108–128 (VAVL…IFNF), and 132–152 (TLTA…VFPP).

The protein belongs to the UPF0421 family.

It localises to the cell membrane. This is UPF0421 protein SAR1980 from Staphylococcus aureus (strain MRSA252).